Here is a 288-residue protein sequence, read N- to C-terminus: Acetyl-coenzyme A carboxylase carboxyl transferase subunit beta (288 aa).

Positions leucine 34–glutamine 288 constitute a CoA carboxyltransferase N-terminal domain. Residues cysteine 38, cysteine 41, cysteine 56, and cysteine 59 each contribute to the Zn(2+) site. Residues cysteine 38 to cysteine 59 form a C4-type zinc finger.

It belongs to the AccD/PCCB family. As to quaternary structure, acetyl-CoA carboxylase is a heterohexamer composed of biotin carboxyl carrier protein (AccB), biotin carboxylase (AccC) and two subunits each of ACCase subunit alpha (AccA) and ACCase subunit beta (AccD). It depends on Zn(2+) as a cofactor.

It localises to the cytoplasm. The enzyme catalyses N(6)-carboxybiotinyl-L-lysyl-[protein] + acetyl-CoA = N(6)-biotinyl-L-lysyl-[protein] + malonyl-CoA. The protein operates within lipid metabolism; malonyl-CoA biosynthesis; malonyl-CoA from acetyl-CoA: step 1/1. Functionally, component of the acetyl coenzyme A carboxylase (ACC) complex. Biotin carboxylase (BC) catalyzes the carboxylation of biotin on its carrier protein (BCCP) and then the CO(2) group is transferred by the transcarboxylase to acetyl-CoA to form malonyl-CoA. This is Acetyl-coenzyme A carboxylase carboxyl transferase subunit beta from Streptococcus thermophilus (strain ATCC BAA-491 / LMD-9).